The primary structure comprises 401 residues: Nodulation protein E (401 aa).

Residues 2 to 400 (DRRVVITGMG…GTNAVLAFKQ (399 aa)) enclose the Ketosynthase family 3 (KS3) domain. Catalysis depends on for beta-ketoacyl synthase activity residues Cys-161, His-293, and His-330. A helical transmembrane segment spans residues 328–347 (HAHCIGAASALEMIACVMAI).

It belongs to the thiolase-like superfamily. Beta-ketoacyl-ACP synthases family.

The protein localises to the cell inner membrane. Its function is as follows. Proposed to synthesize NOD factor fatty acyl chain. Involved in the synthesis of a highly unsaturated fatty acid moiety, which forms part of a lipo-oligosaccharide that is responsible for host specificity. The protein is Nodulation protein E (nodE) of Rhizobium meliloti (Ensifer meliloti).